Here is a 964-residue protein sequence, read N- to C-terminus: Lon protease homolog, mitochondrial (964 aa).

Residues 89–300 (VIALPLPHRP…LTLELVKKEM (212 aa)) enclose the Lon N-terminal domain. 455–462 (GPPGVGKT) contributes to the ATP binding site. Residues 663–740 (GVSNEPDHES…TSKGNKGTDG (78 aa)) are disordered. A compositionally biased stretch (polar residues) spans 673 to 687 (VSASVTEESGNGDNT). A compositionally biased stretch (basic and acidic residues) spans 688–698 (TTKDEILKDPA). Polar residues predominate over residues 703 to 712 (SVTNNVTNPA). Residues 773-957 (HTPVGVVMGL…SEIYDLAFQS (185 aa)) enclose the Lon proteolytic domain. Catalysis depends on residues Ser863 and Lys906.

This sequence belongs to the peptidase S16 family. Homoheptamer. Organized in a ring with a central cavity.

The protein resides in the mitochondrion matrix. The enzyme catalyses Hydrolysis of proteins in presence of ATP.. In terms of biological role, ATP-dependent serine protease that mediates the selective degradation of misfolded, unassembled or oxidatively damaged polypeptides as well as certain short-lived regulatory proteins in the mitochondrial matrix. May also have a chaperone function in the assembly of inner membrane protein complexes. Participates in the regulation of mitochondrial gene expression and in the maintenance of the integrity of the mitochondrial genome. Binds to mitochondrial DNA in a site-specific manner. This chain is Lon protease homolog, mitochondrial (LON2), found in Zea mays (Maize).